The following is a 158-amino-acid chain: Kalata-B3/B6 (158 aa).

The signal sequence occupies residues methionine 1–glycine 22. A propeptide spanning residues alanine 23–lysine 66 is cleaved from the precursor. Positions glycine 67–asparagine 96 form a cross-link, cyclopeptide (Gly-Asn). Intrachain disulfides connect cysteine 71-cysteine 85, cysteine 75-cysteine 87, and cysteine 80-cysteine 93. Residues glycine 97–lysine 121 constitute a propeptide that is removed on maturation. A cross-link (cyclopeptide (Gly-Asp)) is located at residues glycine 122–aspartate 151. 3 disulfide bridges follow: cysteine 126-cysteine 140, cysteine 130-cysteine 142, and cysteine 135-cysteine 148. A propeptide spanning residues glycine 152–alanine 158 is cleaved from the precursor.

It belongs to the cyclotide family. Moebius subfamily. Post-translationally, kalata-B3 and kalata-B6 are cyclic peptides.

Its function is as follows. Probably participates in a plant defense mechanism. Has hemolytic activity. The polypeptide is Kalata-B3/B6 (OAK2) (Oldenlandia affinis).